Reading from the N-terminus, the 521-residue chain is Cyclic AMP-responsive element-binding protein 3-like protein 2 (521 aa).

At 1 to 378 (MEVLESGEQS…CKLAGTQTGT (378 aa)) the chain is on the cytoplasmic side. Ser93 carries the phosphoserine modification. Residue Lys178 forms a Glycyl lysine isopeptide (Lys-Gly) (interchain with G-Cter in SUMO2) linkage. The residue at position 191 (Ser191) is a Phosphoserine. The segment at 196–264 (SVDQLHLPPT…PHKLQGSGPL (69 aa)) is disordered. Residues 208-220 (SSHSSDSEGSLSP) are compositionally biased toward low complexity. Positions 294-357 (ALKKIRRKIK…RTLLQQLQKL (64 aa)) constitute a bZIP domain. The interval 296–325 (KKIRRKIKNKISAQESRRKKKEYMDSLEKK) is basic motif. The interval 336-357 (LRKKVEVLENTNRTLLQQLQKL) is leucine-zipper. Residues 379–399 (CLMVVVLCFAVAFGSLFQGYG) form a helical; Signal-anchor for type II membrane protein membrane-spanning segment. Residues 400-521 (LYPSATKMAL…ELERRVNATF (122 aa)) lie on the Lumenal side of the membrane. Positions 427 to 430 (RNLL) match the S1P recognition motif. N-linked (GlcNAc...) asparagine glycosylation is found at Asn505 and Asn518.

It belongs to the bZIP family. ATF subfamily. In terms of assembly, binds DNA as a dimer. Post-translationally, upon ER stress, translocated to the Golgi apparatus, where it is processed by regulated intramembrane proteolysis (RIP) to release the cytosol-facing N-terminal transcription factor domain. The cleavage is performed sequentially by site-1 and site-2 proteases (S1P/MBTPS1 and S2P/MBTPS2). In terms of processing, N-glycosylated. Ubiquitinated by HRD1/SYVN1; undergoes 'Lys-48'-linked ubiquitination, followed by rapid proteasomal degradation under normal conditions. Upon ER stress, SYVN1 E3 ubiquitin-protein ligase dissociates from its substrate, ubiquitination does not occur and CREB3L2 is stabilized.

It localises to the endoplasmic reticulum membrane. The protein localises to the nucleus. Functionally, transcription factor involved in unfolded protein response (UPR). In the absence of endoplasmic reticulum (ER) stress, inserted into ER membranes, with N-terminal DNA-binding and transcription activation domains oriented toward the cytosolic face of the membrane. In response to ER stress, transported to the Golgi, where it is cleaved in a site-specific manner by resident proteases S1P/MBTPS1 and S2P/MBTPS2. The released N-terminal cytosolic domain is translocated to the nucleus to effect transcription of specific target genes. Plays a critical role in chondrogenesis by activating the transcription of SEC23A, which promotes the transport and secretion of cartilage matrix proteins, and possibly that of ER biogenesis-related genes. In a neuroblastoma cell line, protects cells from ER stress-induced death. In vitro activates transcription of target genes via direct binding to the CRE site. The chain is Cyclic AMP-responsive element-binding protein 3-like protein 2 (Creb3l2) from Rattus norvegicus (Rat).